A 476-amino-acid chain; its full sequence is Glutamate--tRNA ligase (476 aa).

The 'HIGH' region motif lies at Pro-9 to Thr-19. Positions Lys-248–Arg-252 match the 'KMSKS' region motif. Lys-251 provides a ligand contact to ATP.

Belongs to the class-I aminoacyl-tRNA synthetase family. Glutamate--tRNA ligase type 1 subfamily. In terms of assembly, monomer.

It is found in the cytoplasm. The enzyme catalyses tRNA(Glu) + L-glutamate + ATP = L-glutamyl-tRNA(Glu) + AMP + diphosphate. In terms of biological role, catalyzes the attachment of glutamate to tRNA(Glu) in a two-step reaction: glutamate is first activated by ATP to form Glu-AMP and then transferred to the acceptor end of tRNA(Glu). The polypeptide is Glutamate--tRNA ligase (Prochlorococcus marinus (strain MIT 9301)).